The sequence spans 149 residues: Large ribosomal subunit protein uL15C (149 aa).

Residues 21-40 (RIGKHRKQRGGRGNAGGQHH) are disordered.

The protein belongs to the universal ribosomal protein uL15 family. Component of the large ribosomal subunit.

The protein resides in the cytoplasm. Its subcellular location is the cytosol. The protein localises to the endoplasmic reticulum. Component of the large ribosomal subunit. The ribosome is a large ribonucleoprotein complex responsible for the synthesis of proteins in the cell. This chain is Large ribosomal subunit protein uL15C (rpl27a-3), found in Entamoeba histolytica (strain ATCC 30459 / HM-1:IMSS / ABRM).